We begin with the raw amino-acid sequence, 748 residues long: 5-methyltetrahydropteroyltriglutamate--homocysteine methyltransferase (748 aa).

K111 is a 5-methyltetrahydropteroyltri-L-glutamate binding site. L-homocysteine contacts are provided by residues 428-430 (IGS) and E478. Residues 428 to 430 (IGS) and E478 each bind L-methionine. Residues 509 to 510 (RC) and W555 each bind 5-methyltetrahydropteroyltri-L-glutamate. Residue D593 participates in L-homocysteine binding. Residue D593 participates in L-methionine binding. E599 contacts 5-methyltetrahydropteroyltri-L-glutamate. Residues H635, C637, and E659 each coordinate Zn(2+). Catalysis depends on H687, which acts as the Proton donor. C719 is a binding site for Zn(2+).

It belongs to the vitamin-B12 independent methionine synthase family. The cofactor is Zn(2+).

The enzyme catalyses 5-methyltetrahydropteroyltri-L-glutamate + L-homocysteine = tetrahydropteroyltri-L-glutamate + L-methionine. The protein operates within amino-acid biosynthesis; L-methionine biosynthesis via de novo pathway; L-methionine from L-homocysteine (MetE route): step 1/1. In terms of biological role, catalyzes the transfer of a methyl group from 5-methyltetrahydrofolate to homocysteine resulting in methionine formation. This is 5-methyltetrahydropteroyltriglutamate--homocysteine methyltransferase from Herpetosiphon aurantiacus (strain ATCC 23779 / DSM 785 / 114-95).